Reading from the N-terminus, the 1548-residue chain is MPSDFISLLSADLDLESPKSLYSRDSLKLHPSQNFHRAGLLEESVYDLLPKELQLPPPRETSAASMSQTSGGEAGSPPPAVVAADASSAPSSSMGGACSSFTTSSSPTIYSTSVTDSKAMQVESCSSAVGVSNRGVSEKQLTGNTVQQHPSTPKRHTVLYISPPPEDLLDNSRMSCQDEGCGLESEQSCSMWMEDSPSNFSNMSTSSYNDNTEVPRKSRKRNPKQRPGVKRRDCEESNMDIFDADSAKAPHYVLSQLTTDNKGNSKAGNGTLDSQKGTGVKKSPMLCGQYPVKSEGKELKIVVQPETQHRARYLTEGSRGSVKDRTQQGFPTVKLEGHNEPVVLQVFVGNDSGRVKPHGFYQACRVTGRNTTPCKEVDIEGTTVIEVGLDPSSNMTLAVDCVGILKLRNADVEARIGIAGSKKKSTRARLVFRVNITRKDGSTLTLQTPSSPILCTQPAGVPEILKKSLHSCSVKGEEEVFLIGKNFLKGTKVIFQENVSDENSWKSEAEIDMELFHQNHLIVKVPPYHDQHITLPVSVGIYVVTNAGRSHDVQPFTYTPDPAAGALSVNVKKEISSPARPCSFEEALKAMKTTGCNVDKVTILPNALITPLISSSMIKTEDVTPMEVTSEKRSSPIFQTTKTVGSTQQTLETISNIAGNASFSSPSSSHLSPENENQQQLQPKAYNPETLTTIQTQDISQPGTFPAVSASSQLPSSDALLQQAAQFQTRDAQSRDTMQSDSVVNLSQLTEAPQQQQSPLQEQAQIPSNIFPSPNSVSQLQSTIQQLQAGSFTGSTASGSNGSVDLVQQVLEAQQQLSSVLFSTPDGNENVQEQLNADIFQVSQIQNSVSPGMFSSTESAVHTRPDNLLPGRADSVHQQTENTLSSQQQQQQQQQQQQQQQVIESSAAMVMEMQQSICQAAAQIQSELFPSAASANGSLQQSPVYQQPSHMMSALPTSEDMQMQCELFSSPPAVSGNETSTTTTPQVATPGSTMFQPPNSGDGEETGAQAKQIQSSVFQTMVQMQHSGDSQPQVNLFSSTKNIMSVQSNGTQQQGNSLFQQGSEMLSLQSGSFLQQSSHSQAQLFHPQNPIADAQSLSQETQGPMFHSANPIVHSQTSTASSEQLQPSMFHSQSTIAVLQGSSVPQDQQSPNIYLSQSSISNLQTNTVAQEEQISFFSAQNSISPLQSTSNTEQQAAFQQQPPISHIQTPLLSQEQAQPSQQGLFQPQVALGSLPANPMPQNQQGPIFQTQRPIVGMQSNSPSQEQQQQQQQQQQQQQQQQQQSILFSNQNAMATMASQKQPPPNMIFSPNQNPMASQEQQNQSIFHQQSNMAPMNQEQQPMQFQNQPTVSSLQNPGPTPSESPQTSLFHSSPQIQLVQGSPSSQEQQVTLFLSPASMSALQTSINQPDMQQSPLYSPQNNIPGIQGSTSSPQPQAALFHNTTGGTINQLQNSPGSSQQTSGMFLFGIQNNCSQLLTSGPATLPEQLMAINQPGQPQNEGQSSVTTLLSQQMPESAPLASSVNNSQNMEKIDLLVSLQSQGNNLTGSF.

Residues 54 to 106 (QLPPPRETSAASMSQTSGGEAGSPPPAVVAADASSAPSSSMGGACSSFTTSSS) are disordered. Residues 81-106 (VVAADASSAPSSSMGGACSSFTTSSS) show a composition bias toward low complexity. Ser137 is modified (phosphoserine). Lys139 bears the N6-acetyllysine mark. Over residues 141-151 (LTGNTVQQHPS) the composition is skewed to polar residues. Disordered stretches follow at residues 141–180 (LTGN…QDEG), 192–237 (WMED…CEES), and 258–282 (TTDN…GVKK). Position 151 is a phosphoserine (Ser151). Thr152 is modified (phosphothreonine; by CDK5). Ser172 bears the Phosphoserine mark. Over residues 196 to 209 (SPSNFSNMSTSSYN) the composition is skewed to low complexity. Residues 217–229 (KSRKRNPKQRPGV) are compositionally biased toward basic residues. Residues 258 to 277 (TTDNKGNSKAGNGTLDSQKG) show a composition bias toward polar residues. Residues 281–460 (KKSPMLCGQY…SPILCTQPAG (180 aa)) enclose the RHD domain. Residues 310–317 (RARYLTEG) mediate DNA binding. Lys572 participates in a covalent cross-link: Glycyl lysine isopeptide (Lys-Gly) (interchain with G-Cter in SUMO1); alternate. A Glycyl lysine isopeptide (Lys-Gly) (interchain with G-Cter in SUMO2); alternate cross-link involves residue Lys572. Ser577 bears the Phosphoserine mark. Lys619 participates in a covalent cross-link: Glycyl lysine isopeptide (Lys-Gly) (interchain with G-Cter in SUMO2). 6 disordered regions span residues 659–682 (GNAS…QQLQ), 750–777 (TEAP…PNSV), 851–892 (PGMF…QQQQ), 970–1010 (SPPA…GAQA), 1097–1127 (LSQE…QLQP), and 1257–1388 (MQSN…QEQQ). 2 stretches are compositionally biased toward low complexity: residues 662–672 (SFSSPSSSHLS) and 751–765 (EAPQ…EQAQ). Composition is skewed to polar residues over residues 766–777 (IPSNIFPSPNSV), 851–860 (PGMFSSTESA), and 876–886 (VHQQTENTLSS). Over residues 979 to 993 (TSTTTTPQVATPGST) the composition is skewed to low complexity. The span at 1113-1127 (VHSQTSTASSEQLQP) shows a compositional bias: polar residues. Positions 1264 to 1283 (QEQQQQQQQQQQQQQQQQQQ) are enriched in low complexity. 2 stretches are compositionally biased toward polar residues: residues 1284–1300 (SILF…ASQK) and 1308–1333 (FSPN…SNMA). The segment covering 1334-1348 (PMNQEQQPMQFQNQP) has biased composition (low complexity). Positions 1349-1388 (TVSSLQNPGPTPSESPQTSLFHSSPQIQLVQGSPSSQEQQ) are enriched in polar residues.

As to quaternary structure, homodimer when bound to DNA, completely encircles its DNA target. Interacts with CIDEC; this interaction is direct and retains NFAT5 in the cytoplasm. Does not bind with Fos and Jun transcription factors. Interacts with DDX5 and DDX17; this interaction leads to DDX5/DDX17 recruitment to LNC2 and S100A4 promoters and NFAT5-mediated DDX5/DDX17-enhanced transactivation. In terms of processing, phosphorylated. Phosphorylated at Thr-152 by CDK5 in response to osmotic stress; this phosphorylation mediates its rapid nuclear localization. Poly-ADP-ribosylated by PARP1 in response to DNA damage, promoting recruitment to sites of R-loop-associated DNA damage.

Its subcellular location is the nucleus. The protein localises to the cytoplasm. It is found in the chromosome. Transcription factor involved, among others, in the transcriptional regulation of osmoprotective and inflammatory genes. Binds the DNA consensus sequence 5'-[ACT][AG]TGGAAA[CAT]A[TA][ATC][CA][ATG][GT][GAC][CG][CT]-3'. Mediates the transcriptional response to hypertonicity. Positively regulates the transcription of LCN2 and S100A4 genes; optimal transactivation of these genes requires the presence of DDX5/DDX17. Also involved in the DNA damage response by preventing formation of R-loops; R-loops are composed of a DNA:RNA hybrid and the associated non-template single-stranded DNA. In Rattus norvegicus (Rat), this protein is Nuclear factor of activated T-cells 5 (Nfat5).